Here is a 278-residue protein sequence, read N- to C-terminus: MATH domain and coiled-coil domain-containing protein At1g31400 (278 aa).

The region spanning 6-131 (EKRITWTIKN…SGQVKIVAEV (126 aa)) is the MATH domain. Positions 232 to 267 (KLDWLEKKLKEVGKTRMQQLEQNLKDLKESLCWSSD) form a coiled coil.

This is MATH domain and coiled-coil domain-containing protein At1g31400 from Arabidopsis thaliana (Mouse-ear cress).